Consider the following 266-residue polypeptide: Basic endochitinase C (266 aa).

Residues 1–23 form the signal peptide; it reads MRSLAVVVAVVATVAMAIGTAHG. Disulfide bonds link cysteine 46–cysteine 108, cysteine 120–cysteine 128, and cysteine 246–cysteine 259. Glutamate 90 (proton donor) is an active-site residue.

The protein belongs to the glycosyl hydrolase 19 family. Chitinase class II subfamily. Localized to the starchy endoderm of the seed May localize to other parts of the seed including the aleurone cells (at protein level).

It catalyses the reaction Random endo-hydrolysis of N-acetyl-beta-D-glucosaminide (1-&gt;4)-beta-linkages in chitin and chitodextrins.. Functionally, defense against chitin-containing fungal pathogens. Binds the hyphal tips of fungi and degrades nascent chitin. The sequence is that of Basic endochitinase C from Secale cereale (Rye).